We begin with the raw amino-acid sequence, 232 residues long: Chaperone protein LpfB (232 aa).

A signal peptide spans 1–23 (MNRSRLISCTALVLALIAQNSFA).

It belongs to the periplasmic pilus chaperone family.

Its subcellular location is the periplasm. Functionally, required for the biogenesis of long polar fimbria; binds and interact with LpfA. This Salmonella typhimurium (strain LT2 / SGSC1412 / ATCC 700720) protein is Chaperone protein LpfB (lpfB).